We begin with the raw amino-acid sequence, 77 residues long: uncharacterized protein (77 aa).

Residues 53–77 (KRVSSEANKEKSDITELLRKQVRPD) are disordered.

This is an uncharacterized protein from Escherichia coli (strain K12).